Consider the following 377-residue polypeptide: G-protein coupled receptor 54 (377 aa).

Over 1 to 49 the chain is Extracellular; it reads MYSSEELWNSTEQVWINGSGTNFSLGRHEDDEEEEGDKHPFFTDAWLVP. Asn9, Asn17, and Asn22 each carry an N-linked (GlcNAc...) asparagine glycan. Residues 50–70 form a helical membrane-spanning segment; sequence LFFSLIMLVGLVGNSLVIYVI. Residues 71 to 91 are Cytoplasmic-facing; the sequence is SKHRQMRTATNFYIANLAATD. A helical transmembrane segment spans residues 92–112; it reads IIFLVCCVPFTATLYPLPGWI. The Extracellular segment spans residues 113 to 119; the sequence is FGNFMCK. Cysteines 118 and 198 form a disulfide. Residues 120–140 traverse the membrane as a helical segment; that stretch reads FVAFLQQVTVQATCITLTAMS. Residues 141 to 160 are Cytoplasmic-facing; that stretch reads GDRCYVTVYPLKSLRHRTPK. The helical transmembrane segment at 161–181 threads the bilayer; it reads VAMIVSICIWIGSFVLSTPIL. Over 182–209 the chain is Extracellular; the sequence is MYQRIEEGYWYGPRQYCMERFPSKTHER. Residues 210-230 traverse the membrane as a helical segment; it reads AFILYQFIAAYLLPVLTISFC. The Cytoplasmic segment spans residues 231–269; the sequence is YTLMVKRVGQPTVEPVDNNYQVNLLSERTISIRSKVSKM. Residues 270–290 form a helical membrane-spanning segment; that stretch reads VVVIVLLFAICWGPIQIFVLF. Over 291-305 the chain is Extracellular; that stretch reads QSFYPNYQPNYATYK. Residues 306–328 traverse the membrane as a helical segment; sequence IKTWANCMSYANSSVNPIVYGFM. Residues 329-377 lie on the Cytoplasmic side of the membrane; the sequence is GASFQKSFRKTFPFLFKHKVRDSSMASRTANAEIKFVAAEEGNNNNAVN.

The protein belongs to the G-protein coupled receptor 1 family. Expressed in a significantly high percentage (45-60%) of mature GnRH1, GnRH2, and GnRH3 neurons and in immature GnRH3 neurons, which had migrated to the vicinity of their final locations in the brain. Only 5% of immature GnRH1 and GnRH2 neurons have receptor transcripts.

Its subcellular location is the cell membrane. Its function is as follows. Receptor speculated to be essential for sexual development. May regulate gonadotropin-releasing hormone (GnRH) secretion. The receptor expression could be a 'stop signal' for GnRH1, GnRH2, and GnRH3 neuronal migration, leading to suppression of cell growth and modulation of GnRH secretion, which is important for normal sexual development. The protein is G-protein coupled receptor 54 (gpr54) of Oreochromis niloticus (Nile tilapia).